Consider the following 211-residue polypeptide: Holliday junction branch migration complex subunit RuvA (211 aa).

The tract at residues 1–63 is domain I; it reads MIASLRGTVI…EDSQTLYVFK (63 aa). Residues 64 to 142 form a domain II region; that stretch reads DADEKRAFAT…DLGEIADTGA (79 aa). The tract at residues 143 to 157 is flexible linker; it reads VGAAGAVGDGGDGQA. The tract at residues 158-211 is domain III; that stretch reads VAPDVREQVLEALVGLGFTESKAGTTIEAVLSQWSAPQAPDASGLLRASLAAIK.

This sequence belongs to the RuvA family. In terms of assembly, homotetramer. Forms an RuvA(8)-RuvB(12)-Holliday junction (HJ) complex. HJ DNA is sandwiched between 2 RuvA tetramers; dsDNA enters through RuvA and exits via RuvB. An RuvB hexamer assembles on each DNA strand where it exits the tetramer. Each RuvB hexamer is contacted by two RuvA subunits (via domain III) on 2 adjacent RuvB subunits; this complex drives branch migration. In the full resolvosome a probable DNA-RuvA(4)-RuvB(12)-RuvC(2) complex forms which resolves the HJ.

The protein localises to the cytoplasm. The RuvA-RuvB-RuvC complex processes Holliday junction (HJ) DNA during genetic recombination and DNA repair, while the RuvA-RuvB complex plays an important role in the rescue of blocked DNA replication forks via replication fork reversal (RFR). RuvA specifically binds to HJ cruciform DNA, conferring on it an open structure. The RuvB hexamer acts as an ATP-dependent pump, pulling dsDNA into and through the RuvAB complex. HJ branch migration allows RuvC to scan DNA until it finds its consensus sequence, where it cleaves and resolves the cruciform DNA. The polypeptide is Holliday junction branch migration complex subunit RuvA (Corynebacterium jeikeium (strain K411)).